The sequence spans 371 residues: Cytochrome b (371 aa).

Helical transmembrane passes span 25-45 (FGSM…FLSM), 69-90 (WMMQ…YMHI), 105-125 (WLSG…GYVL), and 170-190 (FFAL…VHIM). Residues histidine 75 and histidine 89 each coordinate heme b. Histidine 174 and histidine 188 together coordinate heme b. Histidine 193 provides a ligand contact to a ubiquinone. A run of 4 helical transmembrane segments spans residues 218–238 (YKDL…VSFF), 280–300 (LGGA…PFTH), 312–332 (LMQF…WTAT), and 339–358 (FTTI…MSNP).

This sequence belongs to the cytochrome b family. The cytochrome bc1 complex contains 3 respiratory subunits (MT-CYB, CYC1 and UQCRFS1), 2 core proteins (UQCRC1 and UQCRC2) and probably 6 low-molecular weight proteins. Heme b serves as cofactor.

It is found in the mitochondrion inner membrane. Component of the ubiquinol-cytochrome c reductase complex (complex III or cytochrome b-c1 complex) that is part of the mitochondrial respiratory chain. The b-c1 complex mediates electron transfer from ubiquinol to cytochrome c. Contributes to the generation of a proton gradient across the mitochondrial membrane that is then used for ATP synthesis. This is Cytochrome b (MT-CYB) from Candoia carinata (Papuan tree boa).